A 90-amino-acid polypeptide reads, in one-letter code: Progonadoliberin-1 (90 aa).

An N-terminal signal peptide occupies residues M1 to S21. Q22 is subject to Pyrrolidone carboxylic acid. At G31 the chain carries Glycine amide.

The protein belongs to the GnRH family. The precursor is cleaved by ACE, which removes the Gly-Lys-Arg peptide at the C-terminus, leading to mature hormone. The mature form of Gonadoliberin-1 is also cleaved and degraded by ACE.

The protein localises to the secreted. Stimulates the secretion of gonadotropins; it stimulates the secretion of both luteinizing and follicle-stimulating hormones. This Mus musculus (Mouse) protein is Progonadoliberin-1 (Gnrh1).